Here is a 138-residue protein sequence, read N- to C-terminus: Cystatin-11 (138 aa).

An N-terminal signal peptide occupies residues 1–26 (MMAEPWQALQLLLAILLTLMALPYQA). Cystine bridges form between Cys-94–Cys-102 and Cys-115–Cys-135. An N-linked (GlcNAc...) asparagine glycan is attached at Asn-132.

The protein belongs to the cystatin family. As to expression, detected in the epithelium and lumen of the epididymis, and in sperm (at protein level).

The protein resides in the secreted. Functionally, has antibacterial activity against the Gram-negative bacteria E.coli. May play a role in sperm maturation and fertilization. This is Cystatin-11 (CST11) from Homo sapiens (Human).